The following is a 99-amino-acid chain: Transcription and mRNA export factor SUS1 (99 aa).

Belongs to the ENY2 family. As to quaternary structure, component of the nuclear pore complex (NPC)-associated TREX-2 complex (transcription and export complex 2), composed of at least SUS1, SAC3, THP1, SEM1, and CDC31. TREX-2 contains 2 SUS1 chains. The TREX-2 complex interacts with the nucleoporin NUP1. Component of the 1.8 MDa SAGA transcription coactivator-HAT complex. SAGA is built of 5 distinct domains with specialized functions. Within the SAGA complex, SUS1, SGF11, SGF73 and UBP8 form an additional subcomplex of SAGA called the DUB module (deubiquitination module). Interacts directly with THP1, SAC3, SGF11, and with the RNA polymerase II.

The protein resides in the nucleus. Its subcellular location is the nucleoplasm. It localises to the cytoplasm. It is found in the P-body. Functionally, involved in mRNA export coupled transcription activation by association with both the TREX-2 and the SAGA complexes. At the promoters, SAGA is required for recruitment of the basal transcription machinery. It influences RNA polymerase II transcriptional activity through different activities such as TBP interaction and promoter selectivity, interaction with transcription activators, and chromatin modification through histone acetylation and deubiquitination. Within the SAGA complex, participates in a subcomplex required for deubiquitination of H2B and for the maintenance of steady-state H3 methylation levels. The TREX-2 complex functions in docking export-competent ribonucleoprotein particles (mRNPs) to the nuclear entrance of the nuclear pore complex (nuclear basket). TREX-2 participates in mRNA export and accurate chromatin positioning in the nucleus by tethering genes to the nuclear periphery. May also be involved in cytoplasmic mRNA decay by interaction with components of P-bodies. The chain is Transcription and mRNA export factor SUS1 from Eremothecium gossypii (strain ATCC 10895 / CBS 109.51 / FGSC 9923 / NRRL Y-1056) (Yeast).